The primary structure comprises 359 residues: 4-hydroxy-3-methylbut-2-en-1-yl diphosphate synthase (flavodoxin) (359 aa).

C264, C267, C299, and E306 together coordinate [4Fe-4S] cluster.

This sequence belongs to the IspG family. [4Fe-4S] cluster serves as cofactor.

It catalyses the reaction (2E)-4-hydroxy-3-methylbut-2-enyl diphosphate + oxidized [flavodoxin] + H2O + 2 H(+) = 2-C-methyl-D-erythritol 2,4-cyclic diphosphate + reduced [flavodoxin]. The protein operates within isoprenoid biosynthesis; isopentenyl diphosphate biosynthesis via DXP pathway; isopentenyl diphosphate from 1-deoxy-D-xylulose 5-phosphate: step 5/6. Converts 2C-methyl-D-erythritol 2,4-cyclodiphosphate (ME-2,4cPP) into 1-hydroxy-2-methyl-2-(E)-butenyl 4-diphosphate. The polypeptide is 4-hydroxy-3-methylbut-2-en-1-yl diphosphate synthase (flavodoxin) (Helicobacter pylori (strain G27)).